Here is a 132-residue protein sequence, read N- to C-terminus: Small ribosomal subunit protein uS15 (132 aa).

The protein belongs to the universal ribosomal protein uS15 family. Part of the 30S ribosomal subunit.

This chain is Small ribosomal subunit protein uS15, found in Methanobrevibacter smithii (strain ATCC 35061 / DSM 861 / OCM 144 / PS).